A 316-amino-acid chain; its full sequence is Acetyl-coenzyme A carboxylase carboxyl transferase subunit alpha (316 aa).

The 255-residue stretch at 39–293 folds into the CoA carboxyltransferase C-terminal domain; the sequence is KLEEKNAQLT…KKHLQANLTN (255 aa).

The protein belongs to the AccA family. As to quaternary structure, acetyl-CoA carboxylase is a heterohexamer composed of biotin carboxyl carrier protein (AccB), biotin carboxylase (AccC) and two subunits each of ACCase subunit alpha (AccA) and ACCase subunit beta (AccD).

The protein localises to the cytoplasm. It catalyses the reaction N(6)-carboxybiotinyl-L-lysyl-[protein] + acetyl-CoA = N(6)-biotinyl-L-lysyl-[protein] + malonyl-CoA. It functions in the pathway lipid metabolism; malonyl-CoA biosynthesis; malonyl-CoA from acetyl-CoA: step 1/1. In terms of biological role, component of the acetyl coenzyme A carboxylase (ACC) complex. First, biotin carboxylase catalyzes the carboxylation of biotin on its carrier protein (BCCP) and then the CO(2) group is transferred by the carboxyltransferase to acetyl-CoA to form malonyl-CoA. This is Acetyl-coenzyme A carboxylase carboxyl transferase subunit alpha from Coxiella burnetii (strain CbuK_Q154) (Coxiella burnetii (strain Q154)).